Consider the following 645-residue polypeptide: uncharacterized protein (645 aa).

Residues 1 to 23 (MPSSHRLSATILIFLSLTYISSS) form the signal peptide. 2 disordered regions span residues 30–58 (ITDKQDSSEDDDHLQTFPTPPPIGTTTAS) and 92–129 (NSNANPYFSTTRKPKNRSDSSQKARDPDPQNQVIAGIP). The span at 92-102 (NSNANPYFSTT) shows a compositional bias: polar residues. The N-linked (GlcNAc...) asparagine glycan is linked to N107. Over residues 107–119 (NRSDSSQKARDPD) the composition is skewed to basic and acidic residues. The PAN 1 domain maps to 135 to 214 (CFRRYENSII…QTRDYFEPTD (80 aa)). Cystine bridges form between C161–C187 and C165–C175. A disordered region spans residues 225-247 (ESSSSAPSSEDEDSPPSPPPSAP). PAN domains are found at residues 281-369 (CPRG…EKIC) and 378-465 (CPST…EVEC). 6 disulfide bridges follow: C281-C369, C313-C341, C317-C329, C378-C465, C407-C436, and C411-C422. N421 carries an N-linked (GlcNAc...) asparagine glycan. The span at 556–567 (AGELENNDHEQI) shows a compositional bias: basic and acidic residues. The disordered stretch occupies residues 556-582 (AGELENNDHEQIEDNNTDASEDPVPTK). N570 carries N-linked (GlcNAc...) asparagine glycosylation.

This is an uncharacterized protein from Caenorhabditis elegans.